Reading from the N-terminus, the 456-residue chain is Glycosyl hydrolase family 109 protein (456 aa).

Positions 1 to 31 (MKLNRRHFLKTAGLSAAGILTSQLPLSSAEA) form a signal peptide, tat-type signal. Residues 62–63 (QR), aspartate 84, 133–136 (WEWH), 153–154 (EV), and asparagine 182 contribute to the NAD(+) site. Substrate contacts are provided by residues tyrosine 211, arginine 230, 242–245 (YPTH), and tyrosine 324. Residue tyrosine 242 coordinates NAD(+).

Belongs to the Gfo/Idh/MocA family. Glycosyl hydrolase 109 subfamily. Requires NAD(+) as cofactor. In terms of processing, predicted to be exported by the Tat system. The position of the signal peptide cleavage has not been experimentally proven.

Its function is as follows. Glycosidase. The sequence is that of Glycosyl hydrolase family 109 protein from Shewanella pealeana (strain ATCC 700345 / ANG-SQ1).